The sequence spans 210 residues: Guanylate kinase (210 aa).

Positions 6-184 constitute a Guanylate kinase-like domain; sequence GNIYIVVAPS…ARLDLISIVR (179 aa). 13-20 contacts ATP; the sequence is APSGAGKT.

It belongs to the guanylate kinase family.

Its subcellular location is the cytoplasm. It carries out the reaction GMP + ATP = GDP + ADP. In terms of biological role, essential for recycling GMP and indirectly, cGMP. This chain is Guanylate kinase, found in Chromobacterium violaceum (strain ATCC 12472 / DSM 30191 / JCM 1249 / CCUG 213 / NBRC 12614 / NCIMB 9131 / NCTC 9757 / MK).